The following is a 197-amino-acid chain: Protein Hikeshi (197 aa).

The tract at residues 18–55 is required for F-X-F-G repeats-nucleoporins recognition and nuclear import; it reads VAEDKFVFDLPDYESINHVVVFMLGTIPFPEGMGGSVY. The interval 124–134 is flexible linker region involved in nuclear import of HSP70 proteins; the sequence is QTPVGNAAVSS.

This sequence belongs to the OPI10 family. In terms of assembly, forms an asymmetric homodimer; required for binding and nuclear import of HSP70 proteins. Interacts with ATP-bound HSP70 proteins. Interacts with NUP62 and NUP153 (via F-X-F-G repeats). Interacts with HSPA8.

Its subcellular location is the cytoplasm. It localises to the cytosol. It is found in the nucleus. Functionally, acts as a specific nuclear import carrier for HSP70 proteins following heat-shock stress: acts by mediating the nucleoporin-dependent translocation of ATP-bound HSP70 proteins into the nucleus. HSP70 proteins import is required to protect cells from heat shock damages. Does not translocate ADP-bound HSP70 proteins into the nucleus. In Homo sapiens (Human), this protein is Protein Hikeshi.